The chain runs to 478 residues: Lysosome membrane protein 2 (478 aa).

The Cytoplasmic segment spans residues 1–4 (MGRC). A helical membrane pass occupies residues 5-27 (CFYTAGTLSLLLLVTSVTLLVAR). The Lumenal portion of the chain corresponds to 28–433 (VFQKAVDQTI…QLKSVINTTL (406 aa)). Residues Asn45, Asn68, Asn105, and Asn122 are each glycosylated (N-linked (GlcNAc...) asparagine). Residues 155 to 191 (LIEAMLKAYQQKLFVIHTVHELLWGYKDEILSLVHIF) form an important for interaction with GBA1 region. Asn206, Asn224, Asn249, and Asn304 each carry an N-linked (GlcNAc...) asparagine glycan. Cystine bridges form between Cys274–Cys329 and Cys312–Cys318. 3 N-linked (GlcNAc...) asparagine glycosylation sites follow: Asn325, Asn412, and Asn430. The chain crosses the membrane as a helical span at residues 434-459 (VVTNIPYIIMALGVFFGLVFTWLACR). The Cytoplasmic portion of the chain corresponds to 460-478 (GQGSMDEGTADERAPLIRT).

Belongs to the CD36 family. In terms of assembly, interacts with GBA1. Acylated by palmitic acid group(s). Post-translationally, heavily glycosylated. As to expression, detected in the extracts of brain, heart, lung, liver and kidney.

Its subcellular location is the lysosome membrane. Its function is as follows. Acts as a lysosomal receptor for glucosylceramidase (GBA1) targeting. This Mus musculus (Mouse) protein is Lysosome membrane protein 2 (Scarb2).